Here is a 394-residue protein sequence, read N- to C-terminus: Penicillopepsin-2 (394 aa).

Positions 1–20 are cleaved as a signal peptide; the sequence is MVVFSKITVVLAGLATVASA. The propeptide at 21 to 71 is activation peptide; it reads VPTGTSRKSTFTVNQKARPVAQAKAINLPGMYASALSKYGAAVPASVKAAA. Residues 87–391 enclose the Peptidase A1 domain; it reads YLTPVNVGGT…DANGPRLGFA (305 aa). Residue D103 is part of the active site. N-linked (GlcNAc...) asparagine glycosylation occurs at N132. D283 is an active-site residue. C319 and C354 form a disulfide bridge.

It belongs to the peptidase A1 family. In terms of assembly, monomer.

The protein localises to the secreted. The enzyme catalyses Hydrolysis of proteins with broad specificity similar to that of pepsin A, preferring hydrophobic residues at P1 and P1', but also cleaving 20-Gly-|-Glu-21 in the B chain of insulin. Clots milk, and activates trypsinogen.. Secreted aspartic endopeptidase that allows assimilation of proteinaceous substrates. The scissile peptide bond is attacked by a nucleophilic water molecule activated by two aspartic residues in the active site. Shows a broad primary substrate specificity. Favors hydrophobic residues at the P1 and P1' positions, but can also activate trypsinogen and hydrolyze the B chain of insulin between positions 'Gly-20' and 'Glu-21'. This is Penicillopepsin-2 from Penicillium janthinellum (Penicillium vitale).